The sequence spans 562 residues: Potassium-transporting ATPase potassium-binding subunit (562 aa).

Transmembrane regions (helical) follow at residues 6 to 26, 62 to 82, 132 to 152, 175 to 195, 253 to 273, 283 to 303, 327 to 347, 356 to 376, 379 to 399, 416 to 436, 483 to 503, and 524 to 544; these read FLLI…LGGF, YALA…VLLM, GLTV…FALI, LYVL…QGVL, FVQM…FGQV, LIWA…YAEL, FGIL…CGAV, ALGG…FGGV, GLYG…LMIG, MTAL…ALAL, LLLA…VLAI, and GLLF…LTFI.

The protein belongs to the KdpA family. The system is composed of three essential subunits: KdpA, KdpB and KdpC.

The protein resides in the cell inner membrane. In terms of biological role, part of the high-affinity ATP-driven potassium transport (or Kdp) system, which catalyzes the hydrolysis of ATP coupled with the electrogenic transport of potassium into the cytoplasm. This subunit binds the periplasmic potassium ions and delivers the ions to the membrane domain of KdpB through an intramembrane tunnel. This is Potassium-transporting ATPase potassium-binding subunit from Yersinia pestis bv. Antiqua (strain Antiqua).